The following is a 754-amino-acid chain: Elongation factor G-1, mitochondrial (754 aa).

A mitochondrion-targeting transit peptide spans 1–17; sequence MARFPTSPAPNRLLRLF. The tr-type G domain maps to 63–340; sequence DKLRNIGISA…GVVSFLPSPN (278 aa). Residues 72–79, 139–143, and 193–196 contribute to the GTP site; these read AHIDSGKT, DTPGH, and NKLD.

The protein belongs to the TRAFAC class translation factor GTPase superfamily. Classic translation factor GTPase family. EF-G/EF-2 subfamily. In terms of tissue distribution, expressed in cotyledons and adult leaves at the same levels.

The protein localises to the mitochondrion. It participates in protein biosynthesis; polypeptide chain elongation. Its function is as follows. Mitochondrial GTPase that catalyzes the GTP-dependent ribosomal translocation step during translation elongation. During this step, the ribosome changes from the pre-translocational (PRE) to the post-translocational (POST) state as the newly formed A-site-bound peptidyl-tRNA and P-site-bound deacylated tRNA move to the P and E sites, respectively. Catalyzes the coordinated movement of the two tRNA molecules, the mRNA and conformational changes in the ribosome. In Arabidopsis thaliana (Mouse-ear cress), this protein is Elongation factor G-1, mitochondrial (MEFG1).